The primary structure comprises 153 residues: Acetylacetone-cleaving enzyme (153 aa).

As to quaternary structure, homotetramer. Fe cation is required as a cofactor.

It carries out the reaction acetylacetone + O2 = methylglyoxal + acetate + H(+). The protein operates within xenobiotic degradation; acetylacetone degradation. Its function is as follows. Cleaves acetylacetone to equimolar amounts of methylglyoxal and acetate, consuming one equivalent of molecular oxygen. The chain is Acetylacetone-cleaving enzyme (dke1) from Acinetobacter johnsonii.